The sequence spans 393 residues: MLRIGKLNLSTMSSAQQRLAQVGSHLTAQKQSLAPQRPYKITVIGSGNWGTTIAKVLAENAGLRPHLFQHQVDMWVFEEKINGVNLTEIINTQHENVKYLPGIKLPKNLHAEPSIVKAAEGADLLVFNIPHQFLPGICKQLSKATLKPHVRAISCLKGLEVTPNGCKLLSTYITEHLGVHCGALSGANLAPEVAKEKWSETTVAYRLPNDFQGHGKDIDRYVLRAAFHRPYFHVRVIEDVAGVSLAGALKNVVALGVGFVHGLNWGDNAASAIQRFGLNETIKFAEVFFPGETNQDTFTKESAGVADLITTCSGGRNVRVAKAMAITGKSAVEVERELLNGQSAQGIITSKEVHELLAAKNLTKEFPLFEAIYQIVYGTESIERLPELIEEDE.

Residues 45 to 50 (GSGNWG), Phe-133, Lys-157, and Ala-190 each bind NAD(+). Residue Lys-157 coordinates substrate. Lys-250 functions as the Proton acceptor in the catalytic mechanism. NAD(+) contacts are provided by Arg-316 and Gln-345. 316-317 (RN) is a binding site for substrate.

It belongs to the NAD-dependent glycerol-3-phosphate dehydrogenase family.

The enzyme catalyses sn-glycerol 3-phosphate + NAD(+) = dihydroxyacetone phosphate + NADH + H(+). This is Glycerol-3-phosphate dehydrogenase [NAD(+)] 1 (gpd1) from Cyberlindnera jadinii (Torula yeast).